Here is an 85-residue protein sequence, read N- to C-terminus: Probable oxaloacetate decarboxylase gamma chain (85 aa).

A helical membrane pass occupies residues 11 to 33 (AATLMVTGMAVVFIFLTILVYLV).

This sequence belongs to the OadG family. As to quaternary structure, heterotrimer of an alpha, a beta and a gamma subunit. Requires Na(+) as cofactor.

Its subcellular location is the cell membrane. The catalysed reaction is oxaloacetate + 2 Na(+)(in) + H(+) = pyruvate + 2 Na(+)(out) + CO2. In terms of biological role, catalyzes the decarboxylation of oxaloacetate coupled to Na(+) translocation. This is Probable oxaloacetate decarboxylase gamma chain from Vibrio parahaemolyticus serotype O3:K6 (strain RIMD 2210633).